Consider the following 561-residue polypeptide: Urocanate hydratase (561 aa).

NAD(+)-binding positions include Gly52–Gly53, Gln130, Gly176–Gly178, Glu196, Arg201, Asn242–Ala243, Gln267–His271, Tyr277–Leu278, and Tyr326. Residue Cys414 is part of the active site. An NAD(+)-binding site is contributed by Gly496.

It belongs to the urocanase family. NAD(+) serves as cofactor.

The protein resides in the cytoplasm. The enzyme catalyses 4-imidazolone-5-propanoate = trans-urocanate + H2O. It participates in amino-acid degradation; L-histidine degradation into L-glutamate; N-formimidoyl-L-glutamate from L-histidine: step 2/3. In terms of biological role, catalyzes the conversion of urocanate to 4-imidazolone-5-propionate. The sequence is that of Urocanate hydratase from Rhizobium rhizogenes (strain K84 / ATCC BAA-868) (Agrobacterium radiobacter).